The following is a 69-amino-acid chain: Cytochrome c oxidase copper chaperone (69 aa).

Residues cysteine 23 and cysteine 24 each contribute to the Cu cation site. In terms of domain architecture, CHCH spans 23 to 65; sequence CCVCKPEKEERDTCILFNGQDSEKCKEFIEKYKECMKGYGFEV. 2 consecutive short sequence motifs (cx9C motif) follow at residues 26 to 36 and 47 to 57; these read CKPEKEERDTC and CKEFIEKYKEC. Cystine bridges form between cysteine 26-cysteine 57 and cysteine 36-cysteine 47.

Belongs to the COX17 family.

Its subcellular location is the mitochondrion intermembrane space. Functionally, copper chaperone for cytochrome c oxidase (COX). Binds two copper ions and deliver them to the Cu(A) site of COX. The protein is Cytochrome c oxidase copper chaperone (COX17) of Saccharomyces cerevisiae (strain ATCC 204508 / S288c) (Baker's yeast).